A 1270-amino-acid chain; its full sequence is DNA-directed RNA polymerase subunit beta (1270 aa).

It belongs to the RNA polymerase beta chain family. The RNAP catalytic core consists of 2 alpha, 1 beta, 1 beta' and 1 omega subunit. When a sigma factor is associated with the core the holoenzyme is formed, which can initiate transcription.

The catalysed reaction is RNA(n) + a ribonucleoside 5'-triphosphate = RNA(n+1) + diphosphate. DNA-dependent RNA polymerase catalyzes the transcription of DNA into RNA using the four ribonucleoside triphosphates as substrates. The polypeptide is DNA-directed RNA polymerase subunit beta (Flavobacterium psychrophilum (strain ATCC 49511 / DSM 21280 / CIP 103535 / JIP02/86)).